Reading from the N-terminus, the 367-residue chain is Queuine tRNA-ribosyltransferase (367 aa).

Aspartate 92 acts as the Proton acceptor in catalysis. Residues 92–96 (DSGGF), aspartate 146, glutamine 188, and glycine 215 each bind substrate. Residues 246-252 (GVGTPKD) are RNA binding. Aspartate 265 functions as the Nucleophile in the catalytic mechanism. Positions 303, 305, 308, and 334 each coordinate Zn(2+).

Belongs to the queuine tRNA-ribosyltransferase family. As to quaternary structure, homodimer. Within each dimer, one monomer is responsible for RNA recognition and catalysis, while the other monomer binds to the replacement base PreQ1. Zn(2+) is required as a cofactor.

The enzyme catalyses 7-aminomethyl-7-carbaguanine + guanosine(34) in tRNA = 7-aminomethyl-7-carbaguanosine(34) in tRNA + guanine. The protein operates within tRNA modification; tRNA-queuosine biosynthesis. Its function is as follows. Catalyzes the base-exchange of a guanine (G) residue with the queuine precursor 7-aminomethyl-7-deazaguanine (PreQ1) at position 34 (anticodon wobble position) in tRNAs with GU(N) anticodons (tRNA-Asp, -Asn, -His and -Tyr). Catalysis occurs through a double-displacement mechanism. The nucleophile active site attacks the C1' of nucleotide 34 to detach the guanine base from the RNA, forming a covalent enzyme-RNA intermediate. The proton acceptor active site deprotonates the incoming PreQ1, allowing a nucleophilic attack on the C1' of the ribose to form the product. After dissociation, two additional enzymatic reactions on the tRNA convert PreQ1 to queuine (Q), resulting in the hypermodified nucleoside queuosine (7-(((4,5-cis-dihydroxy-2-cyclopenten-1-yl)amino)methyl)-7-deazaguanosine). This chain is Queuine tRNA-ribosyltransferase, found in Francisella tularensis subsp. tularensis (strain FSC 198).